The primary structure comprises 183 residues: Adenine phosphoribosyltransferase (183 aa).

It belongs to the purine/pyrimidine phosphoribosyltransferase family. In terms of assembly, homodimer.

Its subcellular location is the cytoplasm. The catalysed reaction is AMP + diphosphate = 5-phospho-alpha-D-ribose 1-diphosphate + adenine. The protein operates within purine metabolism; AMP biosynthesis via salvage pathway; AMP from adenine: step 1/1. In terms of biological role, catalyzes a salvage reaction resulting in the formation of AMP, that is energically less costly than de novo synthesis. The protein is Adenine phosphoribosyltransferase of Photorhabdus laumondii subsp. laumondii (strain DSM 15139 / CIP 105565 / TT01) (Photorhabdus luminescens subsp. laumondii).